The primary structure comprises 247 residues: Fibroblast growth factor 14 (247 aa).

Disordered regions lie at residues methionine 1–arginine 37 and glutamate 216–threonine 247. A compositionally biased stretch (basic and acidic residues) spans glutamine 15 to serine 25.

It belongs to the heparin-binding growth factors family. In terms of assembly, interacts with SCN8A. Brain and testis; widely distributed in the developing nervous system. In adult, high levels in the granular layer of the cerebellum, less in hippocampus and olfactory bulb.

Its subcellular location is the nucleus. Probably involved in nervous system development and function. This chain is Fibroblast growth factor 14 (Fgf14), found in Mus musculus (Mouse).